We begin with the raw amino-acid sequence, 208 residues long: Sec-independent protein translocase protein TatB (208 aa).

A helical membrane pass occupies residues 1-21 (MFDIGVGELTLIAVVALVVLG). The segment covering 178-189 (APEPVAVAPVDA) has biased composition (low complexity). The tract at residues 178-208 (APEPVAVAPVDAGTPAAWTPSAPAKLQEKQP) is disordered.

Belongs to the TatB family. In terms of assembly, the Tat system comprises two distinct complexes: a TatABC complex, containing multiple copies of TatA, TatB and TatC subunits, and a separate TatA complex, containing only TatA subunits. Substrates initially bind to the TatABC complex, which probably triggers association of the separate TatA complex to form the active translocon.

It localises to the cell inner membrane. Part of the twin-arginine translocation (Tat) system that transports large folded proteins containing a characteristic twin-arginine motif in their signal peptide across membranes. Together with TatC, TatB is part of a receptor directly interacting with Tat signal peptides. TatB may form an oligomeric binding site that transiently accommodates folded Tat precursor proteins before their translocation. The protein is Sec-independent protein translocase protein TatB of Xanthomonas euvesicatoria pv. vesicatoria (strain 85-10) (Xanthomonas campestris pv. vesicatoria).